Consider the following 396-residue polypeptide: Chaperone protein DnaJ (396 aa).

Positions 6 to 71 (DYYEVLEVTK…DKRSRYDQFG (66 aa)) constitute a J domain. A CR-type zinc finger spans residues 154–236 (GVEKKFKLKK…CGGDGIVYGE (83 aa)). Zn(2+)-binding residues include cysteine 167, cysteine 170, cysteine 184, cysteine 187, cysteine 210, cysteine 213, cysteine 224, and cysteine 227. CXXCXGXG motif repeat units follow at residues 167 to 174 (CNHCHGTG), 184 to 191 (CPTCKGSG), 210 to 217 (CPTCNGEG), and 224 to 231 (CKECGGDG).

The protein belongs to the DnaJ family. As to quaternary structure, homodimer. It depends on Zn(2+) as a cofactor.

Its subcellular location is the cytoplasm. Its function is as follows. Participates actively in the response to hyperosmotic and heat shock by preventing the aggregation of stress-denatured proteins and by disaggregating proteins, also in an autonomous, DnaK-independent fashion. Unfolded proteins bind initially to DnaJ; upon interaction with the DnaJ-bound protein, DnaK hydrolyzes its bound ATP, resulting in the formation of a stable complex. GrpE releases ADP from DnaK; ATP binding to DnaK triggers the release of the substrate protein, thus completing the reaction cycle. Several rounds of ATP-dependent interactions between DnaJ, DnaK and GrpE are required for fully efficient folding. Also involved, together with DnaK and GrpE, in the DNA replication of plasmids through activation of initiation proteins. This Bacteroides thetaiotaomicron (strain ATCC 29148 / DSM 2079 / JCM 5827 / CCUG 10774 / NCTC 10582 / VPI-5482 / E50) protein is Chaperone protein DnaJ.